A 184-amino-acid polypeptide reads, in one-letter code: Photosystem I assembly protein Ycf4 (184 aa).

Transmembrane regions (helical) follow at residues 22 to 42 (FFWA…GTSS) and 57 to 77 (ILFF…LFIS).

Belongs to the Ycf4 family.

The protein resides in the plastid. It localises to the chloroplast thylakoid membrane. Seems to be required for the assembly of the photosystem I complex. The chain is Photosystem I assembly protein Ycf4 from Nandina domestica (Heavenly bamboo).